Here is a 208-residue protein sequence, read N- to C-terminus: Protein GrpE (208 aa).

A disordered region spans residues 1–62; that stretch reads MTEKDESVKS…ETAVDPKDEE (62 aa). The segment covering 46–55 has biased composition (acidic residues); it reads SNEESSEETA.

This sequence belongs to the GrpE family. Homodimer.

The protein localises to the cytoplasm. Functionally, participates actively in the response to hyperosmotic and heat shock by preventing the aggregation of stress-denatured proteins, in association with DnaK and GrpE. It is the nucleotide exchange factor for DnaK and may function as a thermosensor. Unfolded proteins bind initially to DnaJ; upon interaction with the DnaJ-bound protein, DnaK hydrolyzes its bound ATP, resulting in the formation of a stable complex. GrpE releases ADP from DnaK; ATP binding to DnaK triggers the release of the substrate protein, thus completing the reaction cycle. Several rounds of ATP-dependent interactions between DnaJ, DnaK and GrpE are required for fully efficient folding. This Staphylococcus haemolyticus (strain JCSC1435) protein is Protein GrpE.